Consider the following 211-residue polypeptide: Protein-methionine-sulfoxide reductase heme-binding subunit MsrQ (211 aa).

A run of 4 helical transmembrane segments spans residues 17-37 (LAGLLPFLWLVWAINHGGLGA), 82-102 (LWCFAWATLHLTSYALLELGV), 116-136 (PYLTLGIISWVILLALAFTST), and 153-173 (FVYLVAILAPIHYLWSVKIIS).

It belongs to the MsrQ family. In terms of assembly, heterodimer of a catalytic subunit (MsrP) and a heme-binding subunit (MsrQ). Requires FMN as cofactor. Heme b is required as a cofactor.

It is found in the cell inner membrane. In terms of biological role, part of the MsrPQ system that repairs oxidized periplasmic proteins containing methionine sulfoxide residues (Met-O), using respiratory chain electrons. Thus protects these proteins from oxidative-stress damage caused by reactive species of oxygen and chlorine generated by the host defense mechanisms. MsrPQ is essential for the maintenance of envelope integrity under bleach stress, rescuing a wide series of structurally unrelated periplasmic proteins from methionine oxidation, including the primary periplasmic chaperone SurA and the lipoprotein Pal. MsrQ provides electrons for reduction to the reductase catalytic subunit MsrP, using the quinone pool of the respiratory chain. The chain is Protein-methionine-sulfoxide reductase heme-binding subunit MsrQ from Shigella boydii serotype 18 (strain CDC 3083-94 / BS512).